The chain runs to 639 residues: CD2-associated protein (639 aa).

An SH3 1; truncated domain is found at 1 to 59 (MVDYIVEYDYDAVHDDELTIRVGEIIRNVKKLQEEGWLEGELNGRRGMFPDNFVKEIKR). Residues 1 to 175 (MVDYIVEYDY…EVTDDGETHE (175 aa)) form an interaction with ANLN and localization to the midbody region. Lysine 58 participates in a covalent cross-link: Glycyl lysine isopeptide (Lys-Gly) (interchain with G-Cter in SUMO2). A phosphoserine mark is found at serine 67, serine 80, and serine 86. The SH3 2 domain maps to 108–167 (TKKRQCKVLFEYIPQNEDELELKVGDIIDINEEVEEGWWSGTLNNKLGLFPSNFVKELEV). Over residues 168 to 177 (TDDGETHEAQ) the composition is skewed to basic and acidic residues. The tract at residues 168–209 (TDDGETHEAQDDSETVLAGPTSPIPSLGNVSETASGSVTQPK) is disordered. The span at 195 to 207 (GNVSETASGSVTQ) shows a compositional bias: polar residues. The residue at position 224 (serine 224) is a Phosphoserine. Residues 227–256 (LRTRTSSSETEEKKPEKPLILQSLGPKTQS) form a disordered region. The region spanning 269 to 330 (KAKEYCRTLF…PDNFAVQINE (62 aa)) is the SH3 3 domain. Residues 333–428 (KDFPKPKKPP…PPPPIAKING (96 aa)) are disordered. Short sequence motifs (SH3-binding) lie at residues 336–352 (PKPKKPPPPAKAPAPKP), 378–397 (KPSKPAAPQVPPKKPTPPTK), and 410–422 (PKRPEKPVPPPPP). The span at 341–351 (PPPPAKAPAPK) shows a compositional bias: pro residues. The segment covering 356-379 (AAEKKYFSLKPEEKDEKSTLEQKP) has biased composition (basic and acidic residues). Residues 385–395 (PQVPPKKPTPP) show a composition bias toward pro residues. 5 positions are modified to phosphoserine: serine 458, serine 463, serine 469, serine 510, and serine 514. Lysine 523 participates in a covalent cross-link: Glycyl lysine isopeptide (Lys-Gly) (interchain with G-Cter in SUMO2). Threonine 565 is subject to Phosphothreonine. The stretch at 577-638 (DVKKNSLDEL…IEKLKKAVLS (62 aa)) forms a coiled coil. Serine 582 carries the phosphoserine modification.

In terms of assembly, homodimer. Interacts with F-actin, PKD2, NPHS1 and NPHS2. Interacts with WTIP. Interacts with DDN; interaction is direct. Interacts (via SH3 2 domain) with CBL (via phosphorylated C-terminus). Interacts with BCAR1/p130Cas (via SH3 domain). Interacts with MVB12A and ARHGAP17. Interacts with ANLN, CD2 and CBLB. Interacts with PDCD6IP and TSG101. Interacts with RIN3. Interacts directly with RET (inactive) and CBLC; upon RET activation by GDNF suggested to dissociate from RET as CBLC:CD2AP complex. Interacts with CGNL1 and SH3BP1; probably part of a complex at cell junctions. Interacts with CAPZA1. As to quaternary structure, (Microbial infection) Interacts (via SH3 domains) with Chikungunya virus non-structural protein 3 (via C-terminus); this interaction plays a role in initiation of viral replication. Phosphorylated on tyrosine residues; probably by c-Abl, Fyn and c-Src. In terms of tissue distribution, widely expressed in fetal and adult tissues.

It is found in the cytoplasm. Its subcellular location is the cytoskeleton. The protein resides in the cell projection. It localises to the ruffle. The protein localises to the cell junction. Its function is as follows. Seems to act as an adapter protein between membrane proteins and the actin cytoskeleton. In collaboration with CBLC, modulates the rate of RET turnover and may act as regulatory checkpoint that limits the potency of GDNF on neuronal survival. Controls CBLC function, converting it from an inhibitor to a promoter of RET degradation. May play a role in receptor clustering and cytoskeletal polarity in the junction between T-cell and antigen-presenting cell. May anchor the podocyte slit diaphragm to the actin cytoskeleton in renal glomerolus. Also required for cytokinesis. Plays a role in epithelial cell junctions formation. In Homo sapiens (Human), this protein is CD2-associated protein (CD2AP).